Reading from the N-terminus, the 462-residue chain is Cysteine--tRNA ligase (462 aa).

Cys24 provides a ligand contact to Zn(2+). The short motif at 26–36 (PTVYDDAHLGH) is the 'HIGH' region element. Zn(2+) is bound by residues Cys199, His224, and Glu228. The 'KMSKS' region motif lies at 256–260 (KMSKS). Lys259 contacts ATP.

It belongs to the class-I aminoacyl-tRNA synthetase family. As to quaternary structure, monomer. Requires Zn(2+) as cofactor.

It is found in the cytoplasm. The enzyme catalyses tRNA(Cys) + L-cysteine + ATP = L-cysteinyl-tRNA(Cys) + AMP + diphosphate. The polypeptide is Cysteine--tRNA ligase (Campylobacter jejuni subsp. doylei (strain ATCC BAA-1458 / RM4099 / 269.97)).